The primary structure comprises 140 residues: Histone H2B.1, sperm (140 aa).

The segment at 1 to 47 (MPSQRSPTKRSPTKRSPQKGAGKGGKGSKRGGKARRRGGAAVRRRRR) is disordered. 3 consecutive short sequence motifs (SPKK motif) follow at residues 6-9 (SPTK), 11-14 (SPTK), and 16-19 (SPQK). Basic residues-rich tracts occupy residues 7–17 (PTKRSPTKRSP) and 26–47 (KGSK…RRRR). A phosphoserine mark is found at serine 11 and serine 16. Serine 127 is a glycosylation site (O-linked (GlcNAc) serine). Residue lysine 135 forms a Glycyl lysine isopeptide (Lys-Gly) (interchain with G-Cter in ubiquitin) linkage.

This sequence belongs to the histone H2B family. In terms of assembly, the nucleosome is a histone octamer containing two molecules each of H2A, H2B, H3 and H4 assembled in one H3-H4 heterotetramer and two H2A-H2B heterodimers. The octamer wraps approximately 147 bp of DNA. Monoubiquitination of Lys-135 gives a specific tag for epigenetic transcriptional activation and is also prerequisite for histone H3 'Lys-4' and 'Lys-79' methylation. In terms of processing, phosphorylated on SPKK motifs 2 and 3; which may regulate DNA binding. Dephosphorylated during maturation of spermatids to mature sperm and rephosphorylated at fertilization. Post-translationally, glcNAcylation at Ser-127 promotes monoubiquitination of Lys-135. It fluctuates in response to extracellular glucose, and associates with transcribed genes.

The protein resides in the nucleus. Its subcellular location is the chromosome. Its function is as follows. Core component of nucleosome. Nucleosomes wrap and compact DNA into chromatin, limiting DNA accessibility to the cellular machineries which require DNA as a template. Histones thereby play a central role in transcription regulation, DNA repair, DNA replication and chromosomal stability. DNA accessibility is regulated via a complex set of post-translational modifications of histones, also called histone code, and nucleosome remodeling. The chain is Histone H2B.1, sperm from Strongylocentrotus purpuratus (Purple sea urchin).